The following is a 2263-amino-acid chain: Collagen alpha-6(VI) chain (2263 aa).

The signal sequence occupies residues 1-19 (MMLLILFLVIICSHISVNQ). The nonhelical region stretch occupies residues 20–1391 (DSGPEYADVV…TCCCLFCKCI (1372 aa)). VWFA domains follow at residues 27–206 (DVVF…IKDV), 229–411 (DVVF…RNQI), 436–606 (DIYL…RNQV), 622–791 (DIMF…EDDL), and 809–982 (DVVF…FSDV). N-linked (GlcNAc...) asparagine glycosylation is found at Asn-198, Asn-275, Asn-288, Asn-347, and Asn-520. 2 N-linked (GlcNAc...) asparagine glycosylation sites follow: Asn-930 and Asn-988. VWFA domains follow at residues 1000–1171 (DLVF…NKRI) and 1187–1371 (DVVV…GSRL). N-linked (GlcNAc...) asparagine glycosylation is present at Asn-1290. The tract at residues 1392-1725 (GGDGTMGDPG…GRKGVKGAKG (334 aa)) is triple-helical region. Residues 1397–1723 (MGDPGPPGKR…PPGRKGVKGA (327 aa)) are disordered. Residues 1498–1508 (TPGDRGAKGLR) are compositionally biased toward basic and acidic residues. Positions 1508–1510 (RGD) match the Cell attachment site motif. The span at 1547–1559 (SRRKTAAHGRRGH) shows a compositional bias: basic residues. Over residues 1680-1689 (GDPGGPGETG) the composition is skewed to gly residues. Positions 1726–2263 (LASFSTCELI…MIESAPKQHD (538 aa)) are nonhelical region. VWFA domains follow at residues 1757–1937 (ELVF…ERLQ) and 1965–2166 (DAAF…INSI).

Belongs to the type VI collagen family. Trimers composed of three different chains: alpha-1(VI), alpha-2(VI), and alpha-3(VI) or alpha-5(VI) or alpha-6(VI). In terms of processing, prolines at the third position of the tripeptide repeating unit (G-X-Y) are hydroxylated in some or all of the chains.

The protein resides in the secreted. It is found in the extracellular space. It localises to the extracellular matrix. In terms of biological role, collagen VI acts as a cell-binding protein. In Homo sapiens (Human), this protein is Collagen alpha-6(VI) chain (COL6A6).